The primary structure comprises 1978 residues: Dedicator of cytokinesis protein 4 (1978 aa).

The SH3 domain occupies 6–67 (EHEKYGVVIA…PSSYVHLKNA (62 aa)). Y167 carries the phosphotyrosine modification. The residue at position 193 (T193) is a Phosphothreonine. The region spanning 401–574 (RNDLYITVER…ESFWITSFLC (174 aa)) is the C2 DOCK-type domain. A DOCKER domain is found at 1199–1605 (KTELNKEEMY…FGIQEFPACI (407 aa)). Residues S1608, S1616, S1623, S1627, S1629, and S1640 each carry the phosphoserine modification. Disordered regions lie at residues 1657 to 1738 (SQAS…IYPT) and 1751 to 1978 (IGDG…VSQL). Residues 1681–1712 (PSPSTSSLSSTHSASPNVTSSAPSSARASPLL) show a composition bias toward low complexity. Position 1778 is a phosphoserine (S1778). Residues 1797–1803 (PPVPPRP) carry the SH3-binding motif. The segment covering 1804-1818 (TQTASPARHTTSVSP) has biased composition (polar residues). Residues 1842-1872 (SPGLSSNSPVLSGSYSSGISSLSRCSTSETS) show a composition bias toward low complexity. The span at 1873-1882 (GFENQANEQS) shows a compositional bias: polar residues. Residues 1885-1895 (VPVPVPVPVPV) show a composition bias toward pro residues. Over residues 1953-1966 (SHLENGTRRTEPGP) the composition is skewed to basic and acidic residues.

This sequence belongs to the DOCK family. Interacts with nucleotide-free Rap1; functions as a guanine nucleotide exchange factor (GEF) for Rap1. Interacts (via DOCKER domain) with RAC1; functions as a guanine nucleotide exchange factor (GEF) for RAC1. Interacts with the SH3 domain of CRK. Interacts with FASLG. Interacts with ELMO2 and EPHA2; mediates activation of RAC1 by EPHA2. Interacts with USH1C (via PDZ 1 domain). In terms of tissue distribution, expressed in inner ear (at protein level).

It localises to the cell membrane. Its subcellular location is the cytoplasm. The protein resides in the cytosol. Functionally, functions as a guanine nucleotide exchange factor (GEF) that promotes the exchange of GDP to GTP, converting inactive GDP-bound small GTPases into their active GTP-bound form. Involved in regulation of adherens junction between cells. Plays a role in cell migration. Has a higher guanine nucleotide exchange factor activity compared to other isoforms. The sequence is that of Dedicator of cytokinesis protein 4 (Dock4) from Mus musculus (Mouse).